Here is a 438-residue protein sequence, read N- to C-terminus: Coenzyme A disulfide reductase (438 aa).

8–33 (GAVAGGATCASQIRRLDKESDIIIFE) contributes to the FAD binding site. Threonine 15, glutamine 19, arginine 22, serine 39, and asparagine 42 together coordinate substrate. The active-site Nucleophile is cysteine 43. The active-site Redox-active is the cysteine 43. Lysine 71 contacts substrate. 151-166 (VLVVGAGYVSLEVLEN) contacts NADP(+). 267–277 (TNVPNIYAIGD) contacts FAD. A substrate-binding site is contributed by histidine 299. Tyrosine 419 is an FAD binding site. A substrate-binding site is contributed by lysine 427.

It belongs to the class-III pyridine nucleotide-disulfide oxidoreductase family. In terms of assembly, homodimer. The cofactor is FAD.

The enzyme catalyses NADP(+) + 2 CoA = CoA-disulfide + NADPH + H(+). In terms of biological role, catalyzes specifically the NADPH-dependent reduction of coenzyme A disulfide. This chain is Coenzyme A disulfide reductase, found in Staphylococcus aureus (strain MSSA476).